The primary structure comprises 161 residues: Nucleotide-binding protein mma_0840 (161 aa).

Belongs to the YajQ family.

Its function is as follows. Nucleotide-binding protein. This Janthinobacterium sp. (strain Marseille) (Minibacterium massiliensis) protein is Nucleotide-binding protein mma_0840.